A 273-amino-acid polypeptide reads, in one-letter code: Hydroxyethylthiazole kinase 2 (273 aa).

Substrate is bound at residue Met45. ATP is bound by residues Lys120 and Thr173. Residue Gly200 participates in substrate binding.

It belongs to the Thz kinase family. It depends on Mg(2+) as a cofactor.

It carries out the reaction 5-(2-hydroxyethyl)-4-methylthiazole + ATP = 4-methyl-5-(2-phosphooxyethyl)-thiazole + ADP + H(+). The protein operates within cofactor biosynthesis; thiamine diphosphate biosynthesis; 4-methyl-5-(2-phosphoethyl)-thiazole from 5-(2-hydroxyethyl)-4-methylthiazole: step 1/1. In terms of biological role, catalyzes the phosphorylation of the hydroxyl group of 4-methyl-5-beta-hydroxyethylthiazole (THZ). The chain is Hydroxyethylthiazole kinase 2 from Leuconostoc mesenteroides subsp. mesenteroides (strain ATCC 8293 / DSM 20343 / BCRC 11652 / CCM 1803 / JCM 6124 / NCDO 523 / NBRC 100496 / NCIMB 8023 / NCTC 12954 / NRRL B-1118 / 37Y).